Consider the following 548-residue polypeptide: Tryprostatin B 6-hydroxylase (548 aa).

The next 3 helical transmembrane spans lie at Met-5–Phe-25, Trp-35–Ala-54, and Leu-73–Phe-93. Cys-491 contributes to the heme binding site.

This sequence belongs to the cytochrome P450 family. The cofactor is heme.

It localises to the membrane. It catalyses the reaction tryprostatin B + reduced [NADPH--hemoprotein reductase] + O2 = 6-hydroxytryprostatin B + oxidized [NADPH--hemoprotein reductase] + H2O + H(+). It participates in mycotoxin biosynthesis. Its function is as follows. Cytochrome P450 monooxygenase; part of the gene cluster that mediates the biosynthesis of fumitremorgins, indole alkaloids that carry not only intriguing chemical structures, but also interesting biological and pharmacological activities. The biosynthesis of fumitremorgin-type alkaloids begins by condensation of the two amino acids L-tryptophan and L-proline to brevianamide F, catalyzed by the non-ribosomal peptide synthetase ftmPS/ftmA. Brevianamide F is then prenylated by the prenyltransferase ftmPT1/ftmB in the presence of dimethylallyl diphosphate, resulting in the formation of tryprostatin B. The three cytochrome P450 monooxygenases, ftmP450-1/ftmC, ftmP450-2/ftmE and ftmP450-3/FtmG, are responsible for the conversion of tryprostatin B to 6-hydroxytryprostatin B, tryprostatin A to fumitremorgin C and fumitremorgin C to 12,13-dihydroxyfumitremorgin C, respectively. The putative methyltransferase ftmMT/ftmD is expected for the conversion of 6-hydroxytryprostatin B to tryprostatin A. FtmPT2/FtmH catalyzes the prenylation of 12,13-dihydroxyfumitre-morgin C in the presence of dimethylallyl diphosphate, resulting in the formation of fumitremorgin B. Fumitremorgin B is further converted to verruculogen by ftmOx1/ftmF via the insertion of an endoperoxide bond between the two prenyl moieties. Finally, verruculogen is further converted to fumitremorgin A by the verruculogen prenyltransferase ftmPT3. The chain is Tryprostatin B 6-hydroxylase from Neosartorya fischeri (strain ATCC 1020 / DSM 3700 / CBS 544.65 / FGSC A1164 / JCM 1740 / NRRL 181 / WB 181) (Aspergillus fischerianus).